The following is a 376-amino-acid chain: Thiol-disulfide oxidoreductase LTO1 (376 aa).

Residues 1 to 45 (MMARFVSVSSCQFHFGFREVSPPSVTSYPRRFEVSDRRFPAIPIK) constitute a chloroplast transit peptide. Residues 44 to 77 (IKCSSSEPENGEDSAPSLSSSSSSSTSEVSTSNS) form a disordered region. The Stromal segment spans residues 46–81 (CSSSEPENGEDSAPSLSSSSSSSTSEVSTSNSSTYN). Low complexity predominate over residues 57-77 (SAPSLSSSSSSSTSEVSTSNS). A helical transmembrane segment spans residues 82-102 (WYTGIGGIGMLDTAYLTYLKV). Topologically, residues 103 to 125 (TGSDAFCPIGGGTCGDVLNSDYA) are lumenal. A disulfide bridge links Cys109 with Cys116. Residues 126 to 146 (VVFGVPLPVIGFVMYGVVTAL) traverse the membrane as a helical segment. At 147–165 (SAELGEGNLPFGISKSNGR) the chain is on the stromal side. Residues 166–186 (FALFGITTAMASASAYFLYIL) form a helical membrane-spanning segment. Residues 187–192 (STKLSG) lie on the Lumenal side of the membrane. Residues 193–213 (SSCLYCLVSAFLSFSLFFLSV) traverse the membrane as a helical segment. Cys195 and Cys198 are disulfide-bonded. The Stromal segment spans residues 214–223 (KDVKLQEIQQ). A helical transmembrane segment spans residues 224–244 (VVGLQICLAIIVVASLTASYS). Residues 245–376 (TAQPIPSRSG…DQANETNQLQ (132 aa)) lie on the Lumenal side of the membrane. Disulfide bonds link Cys293-Cys296 and Cys316-Cys331.

This sequence belongs to the VKOR family. Interacts with the PSII subunits PSBO1 and PSBO2. Interacts with TL17, TL20.3, HCF164, PETJ, VDE1, EDA3, FKBP13 and FKBP20-2. As to expression, expressed in cotyledons, rosette leaves, stems, cauline leaves and flowers.

It is found in the plastid. It localises to the chloroplast thylakoid membrane. Its function is as follows. Thiol-disulfide oxidoreductase catalyzing disulfide bond formation of chloroplast proteins and involved in redox regulation and photosynthetic electron transport. Required for the assembly of photosystem II (PSII) through the formation of disulfide bond in PSBO, a subunit of the PSII oxygen-evolving complex in the thylakoid lumen. Involved in the formation of disulfide bonds in the lumenal protein FKBP13. In vitro, reduces phylloquinone (vitamin K1) and menaquinone (vitamin K2) to their respective quinol. Cannot reduce phylloquinone epoxide to phylloquinone. Plays an important role in regulating the thylakoid lumen redox. This Arabidopsis thaliana (Mouse-ear cress) protein is Thiol-disulfide oxidoreductase LTO1.